The chain runs to 60 residues: UPF0434 protein mma_2578 (60 aa).

This sequence belongs to the UPF0434 family.

The sequence is that of UPF0434 protein mma_2578 from Janthinobacterium sp. (strain Marseille) (Minibacterium massiliensis).